The following is an 813-amino-acid chain: UPF0508 protein KLLA0A06237g (813 aa).

A disordered region spans residues lysine 478–lysine 537. Positions serine 506–lysine 537 are enriched in low complexity.

Belongs to the UPF0508 family.

This is UPF0508 protein KLLA0A06237g from Kluyveromyces lactis (strain ATCC 8585 / CBS 2359 / DSM 70799 / NBRC 1267 / NRRL Y-1140 / WM37) (Yeast).